A 656-amino-acid chain; its full sequence is Acetyl-coenzyme A synthetase (656 aa).

CoA is bound by residues 198–201 and threonine 316; that span reads RGGR. ATP-binding positions include 392–394, 416–421, aspartate 507, and arginine 522; these read GEP and DTFWQT. Serine 530 contacts CoA. Arginine 533 lines the ATP pocket. The Mg(2+) site is built by valine 544, histidine 546, and valine 549. Residue arginine 591 participates in CoA binding. The residue at position 616 (lysine 616) is an N6-acetyllysine.

It belongs to the ATP-dependent AMP-binding enzyme family. Requires Mg(2+) as cofactor. Acetylated. Deacetylation by the SIR2-homolog deacetylase activates the enzyme.

It catalyses the reaction acetate + ATP + CoA = acetyl-CoA + AMP + diphosphate. In terms of biological role, catalyzes the conversion of acetate into acetyl-CoA (AcCoA), an essential intermediate at the junction of anabolic and catabolic pathways. AcsA undergoes a two-step reaction. In the first half reaction, AcsA combines acetate with ATP to form acetyl-adenylate (AcAMP) intermediate. In the second half reaction, it can then transfer the acetyl group from AcAMP to the sulfhydryl group of CoA, forming the product AcCoA. In Rhodobacter capsulatus (strain ATCC BAA-309 / NBRC 16581 / SB1003), this protein is Acetyl-coenzyme A synthetase.